The primary structure comprises 57 residues: Large ribosomal subunit protein bL32 (57 aa).

The interval 1–21 (MAVQQRRSSKHRRDKRRSHDA) is disordered. Positions 7 to 18 (RSSKHRRDKRRS) are enriched in basic residues.

The protein belongs to the bacterial ribosomal protein bL32 family.

The protein is Large ribosomal subunit protein bL32 (rpmF) of Mycoplasma pneumoniae (strain ATCC 29342 / M129 / Subtype 1) (Mycoplasmoides pneumoniae).